The sequence spans 626 residues: NAD-dependent malic enzyme, mitochondrial (626 aa).

Residues methionine 1–phenylalanine 34 constitute a mitochondrion transit peptide. Positions 91 and 125 each coordinate fumarate. Tyrosine 146 (proton donor) is an active-site residue. Arginine 199 is a binding site for (S)-malate. Arginine 199 lines the NAD(+) pocket. The Proton acceptor role is filled by lysine 217. Residues glutamate 288, aspartate 289, and aspartate 312 each contribute to the a divalent metal cation site. 2 residues coordinate NAD(+): alanine 348 and alanine 351. (S)-malate is bound by residues asparagine 467 and asparagine 512.

It belongs to the malic enzymes family. In terms of assembly, heterodimer of two related subunits. It depends on Mg(2+) as a cofactor. Mn(2+) is required as a cofactor.

Its subcellular location is the mitochondrion matrix. It carries out the reaction (S)-malate + NAD(+) = pyruvate + CO2 + NADH. The chain is NAD-dependent malic enzyme, mitochondrial from Solanum tuberosum (Potato).